We begin with the raw amino-acid sequence, 171 residues long: Shikimate kinase (171 aa).

14 to 19 serves as a coordination point for ATP; the sequence is GAGKST. Serine 18 contacts Mg(2+). The substrate site is built by aspartate 36, arginine 60, and glycine 82. Position 120 (arginine 120) interacts with ATP. Position 139 (arginine 139) interacts with substrate. Position 156 (glutamine 156) interacts with ATP.

This sequence belongs to the shikimate kinase family. Monomer. Mg(2+) is required as a cofactor.

The protein resides in the cytoplasm. The catalysed reaction is shikimate + ATP = 3-phosphoshikimate + ADP + H(+). Its pathway is metabolic intermediate biosynthesis; chorismate biosynthesis; chorismate from D-erythrose 4-phosphate and phosphoenolpyruvate: step 5/7. In terms of biological role, catalyzes the specific phosphorylation of the 3-hydroxyl group of shikimic acid using ATP as a cosubstrate. This is Shikimate kinase from Shewanella oneidensis (strain ATCC 700550 / JCM 31522 / CIP 106686 / LMG 19005 / NCIMB 14063 / MR-1).